The primary structure comprises 192 residues: Ion-translocating oxidoreductase complex subunit A (192 aa).

Transmembrane regions (helical) follow at residues Leu5 to Leu25, Ile39 to Val59, Leu65 to Val85, Ala102 to Leu122, Ala134 to Met154, and Ala171 to Val191.

Belongs to the NqrDE/RnfAE family. The complex is composed of six subunits: RnfA, RnfB, RnfC, RnfD, RnfE and RnfG.

The protein resides in the cell inner membrane. Part of a membrane-bound complex that couples electron transfer with translocation of ions across the membrane. This Shewanella sp. (strain ANA-3) protein is Ion-translocating oxidoreductase complex subunit A.